Here is a 187-residue protein sequence, read N- to C-terminus: ECF RNA polymerase sigma factor SigK (187 aa).

A sigma-70 factor domain-2 region spans residues Y30 to Q96. Residues E53–Q56 carry the Interaction with polymerase core subunit RpoC motif. The sigma-70 factor domain-4 stretch occupies residues C133–N182. Residues Y155–R174 constitute a DNA-binding region (H-T-H motif).

The protein belongs to the sigma-70 factor family. ECF subfamily. In terms of assembly, interacts transiently with the RNA polymerase catalytic core formed by RpoA, RpoB, RpoC and RpoZ (2 alpha, 1 beta, 1 beta' and 1 omega subunit) to form the RNA polymerase holoenzyme that can initiate transcription. Interacts (via sigma-70 factor domain 4) with anti-sigma-K factor RskA.

In terms of biological role, sigma factors are initiation factors that promote the attachment of RNA polymerase to specific initiation sites and are then released. Extracytoplasmic function (ECF) sigma factors are held in an inactive form by an anti-sigma factor until released by regulated intramembrane proteolysis. This is ECF RNA polymerase sigma factor SigK (sigK) from Mycobacterium ulcerans (strain Agy99).